The following is a 115-amino-acid chain: Large ribosomal subunit protein bL19 (115 aa).

Belongs to the bacterial ribosomal protein bL19 family.

In terms of biological role, this protein is located at the 30S-50S ribosomal subunit interface and may play a role in the structure and function of the aminoacyl-tRNA binding site. The protein is Large ribosomal subunit protein bL19 of Clostridium tetani (strain Massachusetts / E88).